Reading from the N-terminus, the 289-residue chain is Glucosamine-6-phosphate deaminase 1 (289 aa).

D72 serves as the catalytic Proton acceptor; for enolization step. The active-site For ring-opening step is the D141. H143 acts as the Proton acceptor; for ring-opening step in catalysis. Residue E148 is the For ring-opening step of the active site. T161 is modified (phosphothreonine).

This sequence belongs to the glucosamine/galactosamine-6-phosphate isomerase family. As to quaternary structure, homohexamer. As to expression, widely expressed. Detected in brain, liver, kidney, muscle, ovary, testis, spermatids and spermatozoa. In spermatids, located close to the developing acrosome vesicle. In spermatozoa, found close to the acrosomal region.

The protein localises to the cytoplasm. The enzyme catalyses alpha-D-glucosamine 6-phosphate + H2O = beta-D-fructose 6-phosphate + NH4(+). The protein operates within nucleotide-sugar biosynthesis; UDP-N-acetyl-alpha-D-glucosamine biosynthesis; alpha-D-glucosamine 6-phosphate from D-fructose 6-phosphate: step 1/1. With respect to regulation, allosterically activated by N-acetylglucosamine-6-phosphate (GlcNAc6P). Functionally, catalyzes the reversible conversion of alpha-D-glucosamine 6-phosphate (GlcN-6P) into beta-D-fructose 6-phosphate (Fru-6P) and ammonium ion, a regulatory reaction step in de novo uridine diphosphate-N-acetyl-alpha-D-glucosamine (UDP-GlcNAc) biosynthesis via hexosamine pathway. Deamination is coupled to aldo-keto isomerization mediating the metabolic flux from UDP-GlcNAc toward Fru-6P. At high ammonium level can drive amination and isomerization of Fru-6P toward hexosamines and UDP-GlcNAc synthesis. Has a role in fine tuning the metabolic fluctuations of cytosolic UDP-GlcNAc and their effects on hyaluronan synthesis that occur during tissue remodeling. Seems to trigger calcium oscillations in mammalian eggs. These oscillations serve as the essential trigger for egg activation and early development of the embryo. This chain is Glucosamine-6-phosphate deaminase 1, found in Mus musculus (Mouse).